Consider the following 211-residue polypeptide: DNA-directed RNA polymerases I, II, and III subunit RPABC1 (211 aa).

This sequence belongs to the archaeal Rpo5/eukaryotic RPB5 RNA polymerase subunit family. As to quaternary structure, component of the RNA polymerase I (Pol I), RNA polymerase II (Pol II) and RNA polymerase III (Pol III) complexes consisting of at least 13, 12 and 17 subunits, respectively. In RNA Pol II, this subunit is present in 2-fold molar excess over the other subunits.

It localises to the nucleus. Functionally, DNA-dependent RNA polymerase catalyzes the transcription of DNA into RNA using the four ribonucleoside triphosphates as substrates. Common component of RNA polymerases I, II and III which synthesize ribosomal RNA precursors, mRNA precursors and many functional non-coding RNAs, and small RNAs, such as 5S rRNA and tRNAs, respectively. Pol II is the central component of the basal RNA polymerase II transcription machinery. Pols are composed of mobile elements that move relative to each other. In Pol II, RPB5 is part of the lower jaw surrounding the central large cleft and thought to grab the incoming DNA template. Seems to be the major component in this process. The polypeptide is DNA-directed RNA polymerases I, II, and III subunit RPABC1 (Caenorhabditis briggsae).